A 752-amino-acid polypeptide reads, in one-letter code: MGFTLLIDNYDSFTWNIYADLASVGGNPFVVRNDKITLKEIEGMFADGELERIVISPGPGHPRTDSGVSRDVIAWGMGKLPILGVCMGLECIVDLLGGEIAYAGEIKHGKTSLVQHDSIGVFHNLPQFLSSTRYHSLSAQIQSLPSVLQVTSTTKESGVIMGVRHRTFTVEAVQYHPESCMSEGGRGLMANFIQMKGGKWGGENAWCGVPAEGEGEQPKAKTNGAPSLPTILNKIHAQRLLDVEQAEKIPATTPANVSTSLSLYTSPPLINFRGRMVSTPHTAVMAEIKRASPSKGDIAPTASAPQQALKYALAGASVISVLTEPTWFKGSLLDMLAVRNAVDSLPNRPAILRKDFVLSKYMIDEARLYGADTVLLIVAMLEPQQLKELYDYSVSLGMEPLVEVNNPTELSLALEIGSKVIGVNNRNLHDFNVDMSTTSRVNAALNGRDVVLCALSGISSHEDVEKYVKEGVKGVLVGEALMRASDTKAFLRSLIGLPPLEVVPKPRPLVKICGIRSTNDAKLAINAGADLLGVILVPGTKRCISTSTAREISALVQSARSQSSSKPLEPSLSSPWFTSQSALLSSRRKPLLVGVFQNQSLSDILSAVDEIGLDLVQLHGDEPQAWAKFIPVPVVKVFRVSPEGIVRGGEIRRPGLNQAILLDAGGASGGGGEGKAFPWEHAKRLIQSGEVGSEGHVPLPVILAGGLTPENVGQAIEQAGEGVWCVDVSSGVEGEGGKVKEKVEAFVKAVRG.

A Glutamine amidotransferase type-1 domain is found at 3–202; the sequence is FTLLIDNYDS…IQMKGGKWGG (200 aa). 58-60 lines the L-glutamine pocket; sequence GPG. The active-site Nucleophile; for GATase activity is the C86. L-glutamine is bound at residue 136-137; the sequence is SL. Active-site for GATase activity residues include H176 and E178. An indole-3-glycerol phosphate synthase region spans residues 231–495; that stretch reads ILNKIHAQRL…DTKAFLRSLI (265 aa). The tract at residues 509–752 is N-(5'-phosphoribosyl)anthranilate isomerase; it reads LVKICGIRST…VEAFVKAVRG (244 aa).

The enzyme catalyses N-(5-phospho-beta-D-ribosyl)anthranilate = 1-(2-carboxyphenylamino)-1-deoxy-D-ribulose 5-phosphate. It catalyses the reaction 1-(2-carboxyphenylamino)-1-deoxy-D-ribulose 5-phosphate + H(+) = (1S,2R)-1-C-(indol-3-yl)glycerol 3-phosphate + CO2 + H2O. It carries out the reaction chorismate + L-glutamine = anthranilate + pyruvate + L-glutamate + H(+). It functions in the pathway amino-acid biosynthesis; L-tryptophan biosynthesis; L-tryptophan from chorismate: step 1/5. It participates in amino-acid biosynthesis; L-tryptophan biosynthesis; L-tryptophan from chorismate: step 3/5. The protein operates within amino-acid biosynthesis; L-tryptophan biosynthesis; L-tryptophan from chorismate: step 4/5. Its function is as follows. Trifunctional enzyme bearing the Gln amidotransferase (GATase) domain of anthranilate synthase, indole-glycerolphosphate synthase, and phosphoribosylanthranilate isomerase activities. This Cryptococcus neoformans var. grubii serotype A (strain H99 / ATCC 208821 / CBS 10515 / FGSC 9487) (Filobasidiella neoformans var. grubii) protein is Multifunctional tryptophan biosynthesis protein (TRP1).